The sequence spans 308 residues: Ribosomal RNA large subunit methyltransferase F (308 aa).

It belongs to the methyltransferase superfamily. METTL16/RlmF family.

The protein localises to the cytoplasm. It carries out the reaction adenosine(1618) in 23S rRNA + S-adenosyl-L-methionine = N(6)-methyladenosine(1618) in 23S rRNA + S-adenosyl-L-homocysteine + H(+). Its function is as follows. Specifically methylates the adenine in position 1618 of 23S rRNA. The polypeptide is Ribosomal RNA large subunit methyltransferase F (Salmonella heidelberg (strain SL476)).